Consider the following 785-residue polypeptide: LPS-assembly protein LptD (785 aa).

The N-terminal stretch at 1 to 58 (MSCSCLCMSLYRGADRIGRFYTAHCPQDMALCMHRQKLNPLALALAAAFALNAPAALA) is a signal peptide.

Belongs to the LptD family. As to quaternary structure, component of the lipopolysaccharide transport and assembly complex. Interacts with LptE and LptA.

It localises to the cell outer membrane. Together with LptE, is involved in the assembly of lipopolysaccharide (LPS) at the surface of the outer membrane. This chain is LPS-assembly protein LptD, found in Chromobacterium violaceum (strain ATCC 12472 / DSM 30191 / JCM 1249 / CCUG 213 / NBRC 12614 / NCIMB 9131 / NCTC 9757 / MK).